The following is a 235-amino-acid chain: Probable deoxycytidine kinase FPV151 (235 aa).

An ATP-binding site is contributed by 30–38; it reads GNISAGKST. Substrate is bound by residues E53, Y68, and Q79. The Proton acceptor role is filled by E104. Substrate-binding residues include R105, D110, and E172.

The protein belongs to the DCK/DGK family.

The enzyme catalyses 2'-deoxycytidine + a ribonucleoside 5'-triphosphate = dCMP + a ribonucleoside 5'-diphosphate + H(+). This is Probable deoxycytidine kinase FPV151 from Vertebrata (FPV).